A 70-amino-acid polypeptide reads, in one-letter code: Probable non-specific lipid-transfer protein 2 (70 aa).

Disulfide bonds link Cys-4-Cys-38, Cys-12-Cys-26, Cys-27-Cys-62, and Cys-36-Cys-69.

Potential phospholipid transfer protein. This is Probable non-specific lipid-transfer protein 2 from Zea mays (Maize).